The following is an 89-amino-acid chain: Small ribosomal subunit protein uS15 (89 aa).

It belongs to the universal ribosomal protein uS15 family. In terms of assembly, part of the 30S ribosomal subunit. Forms a bridge to the 50S subunit in the 70S ribosome, contacting the 23S rRNA.

Its function is as follows. One of the primary rRNA binding proteins, it binds directly to 16S rRNA where it helps nucleate assembly of the platform of the 30S subunit by binding and bridging several RNA helices of the 16S rRNA. Functionally, forms an intersubunit bridge (bridge B4) with the 23S rRNA of the 50S subunit in the ribosome. The sequence is that of Small ribosomal subunit protein uS15 from Methylocella silvestris (strain DSM 15510 / CIP 108128 / LMG 27833 / NCIMB 13906 / BL2).